The primary structure comprises 151 residues: Probable cGMP 3',5'-cyclic phosphodiesterase subunit delta (151 aa).

The protein belongs to the PDE6D/unc-119 family. As to quaternary structure, interacts with Pde6.

The protein resides in the nucleus. It is found in the cytoplasm. This chain is Probable cGMP 3',5'-cyclic phosphodiesterase subunit delta, found in Drosophila persimilis (Fruit fly).